The sequence spans 76 residues: MEEIFFGRIGMYEDFQRTRGILQIMARVIVNLLRHAEEIPETTMFISAGEIDLSYPELMRKLTDRIFGANLIRLFK.

This is an uncharacterized protein from Archaeoglobus fulgidus (strain ATCC 49558 / DSM 4304 / JCM 9628 / NBRC 100126 / VC-16).